Consider the following 149-residue polypeptide: Transcriptional repressor NrdR (149 aa).

The segment at 3–34 (CPFCSATDTKVIDSRLVADGHQVRRRRECVQC) is a zinc-finger region. The region spanning 49 to 139 (PRVVKQDGSR…VYRAFEDVSE (91 aa)) is the ATP-cone domain.

This sequence belongs to the NrdR family. It depends on Zn(2+) as a cofactor.

Its function is as follows. Negatively regulates transcription of bacterial ribonucleotide reductase nrd genes and operons by binding to NrdR-boxes. The polypeptide is Transcriptional repressor NrdR (Shewanella halifaxensis (strain HAW-EB4)).